The chain runs to 147 residues: UPF0306 protein YhbP (147 aa).

The protein belongs to the UPF0306 family.

The polypeptide is UPF0306 protein YhbP (Escherichia coli (strain K12 / MC4100 / BW2952)).